A 568-amino-acid chain; its full sequence is MAGUK p55 subfamily member 3 (568 aa).

L27 domains follow at residues 6–60 (EDSG…ERQS) and 61–118 (PTPV…FDPV). In terms of domain architecture, PDZ spans 137–218 (IVRLVKNKEP…SITLKIIPAT (82 aa)). Residues 226–296 (DSKVFMRALF…PSKQFQERRL (71 aa)) enclose the SH3 domain. Phosphoserine is present on Ser307. The region spanning 385 to 568 (PRLVVLIGSL…QEPAASSELS (184 aa)) is the Guanylate kinase-like domain.

It belongs to the MAGUK family. As to quaternary structure, interacts with HTR2C; this interaction stabilizes the receptor at the plasma membrane and prevents the desensitization of the HTR2C receptor-mediated calcium response. Interacts with HTR2A. Interacts with HTR4. Interacts (via PDZ domain) with CADM1 (via C-terminus)Interacts (via PDZ domain) with CADM1; this interaction connects CADM1 with DLG1. Interacts (via Guanylate kinase-like domain) with PALS1. Interacts with DLG1 (via N-terminus); this interaction connects CADM1 with DLG1 and links CADM1 with the regulatory subunit of phosphoinositide-3-kinase (PI3K) by forming a multiprotein complex and participates in cell spreading. As to expression, expressed in brain, skeletal muscle, testis, kidney, and lung.

The protein localises to the apical cell membrane. It is found in the cell membrane. Its subcellular location is the cell junction. It localises to the adherens junction. In terms of biological role, participates in cell spreading through the phosphoinositide-3-kinase (PI3K) pathway by connecting CADM1 to DLG1 and the regulatory subunit of phosphoinositide-3-kinase (PI3K). Stabilizes HTR2C at the plasma membrane and prevents its desensitization. May participates in the maintenance of adherens junctions. The polypeptide is MAGUK p55 subfamily member 3 (Mus musculus (Mouse)).